Consider the following 97-residue polypeptide: YcgL domain-containing protein PA1295 (97 aa).

The 85-residue stretch at 3-87 folds into the YcgL domain; that stretch reads RICSVYKSPR…GEEEYIEHLP (85 aa).

This chain is YcgL domain-containing protein PA1295, found in Pseudomonas aeruginosa (strain ATCC 15692 / DSM 22644 / CIP 104116 / JCM 14847 / LMG 12228 / 1C / PRS 101 / PAO1).